Reading from the N-terminus, the 830-residue chain is AdoMet-dependent rRNA methyltransferase SPB1 (830 aa).

The S-adenosyl-L-methionine site is built by G58, W60, D78, D94, and D119. K159 serves as the catalytic Proton acceptor. Residues 345–388 (LTEEEQIEKELQEMQQKQNLKKKREKRKQNEIKQKEITRMQMQM) adopt a coiled-coil conformation. Disordered stretches follow at residues 485–529 (AKEA…SDSD) and 565–642 (EADL…AREV). Acidic residues-rich tracts occupy residues 516–529 (VDDD…SDSD), 591–610 (VSEE…DSDF), and 618–630 (DESD…EDEA). The segment covering 631–642 (ERSQKEKHAREV) has biased composition (basic and acidic residues).

It belongs to the class I-like SAM-binding methyltransferase superfamily. RNA methyltransferase RlmE family. SPB1 subfamily. Component of the nucleolar and nucleoplasmic pre-60S ribosomal particle.

It localises to the nucleus. It is found in the nucleolus. It carries out the reaction a ribonucleotide in rRNA + S-adenosyl-L-methionine = a 2'-O-methylribonucleotide in rRNA + S-adenosyl-L-homocysteine + H(+). Its function is as follows. Required for proper assembly of pre-ribosomal particles during the biogenesis of the 60S ribosomal subunit. The chain is AdoMet-dependent rRNA methyltransferase SPB1 from Eremothecium gossypii (strain ATCC 10895 / CBS 109.51 / FGSC 9923 / NRRL Y-1056) (Yeast).